The chain runs to 102 residues: MIESYSDSFVAMKKFAETYAKRTNTFFCNDLSITQIVLEGLAKHKDEYGAPLCPCRHYDDKSEEVASTYWNCPCVPMRERKECHCMLFLTKDNEFAGSSQTL.

Cys53 contributes to the [4Fe-4S] cluster binding site. Catalysis depends on Cys55, which acts as the Nucleophile. Cys55 and Cys85 are oxidised to a cystine. Cys72, Cys74, and Cys83 together coordinate [4Fe-4S] cluster.

It belongs to the ferredoxin thioredoxin reductase beta subunit family. As to quaternary structure, heterodimer of subunit A (variable subunit) and subunit B (catalytic subunit). Heterodimeric FTR forms a complex with ferredoxin and thioredoxin. [4Fe-4S] cluster serves as cofactor.

Its subcellular location is the plastid. The protein resides in the chloroplast. The enzyme catalyses [thioredoxin]-disulfide + 2 reduced [2Fe-2S]-[ferredoxin] + 2 H(+) = [thioredoxin]-dithiol + 2 oxidized [2Fe-2S]-[ferredoxin]. Its function is as follows. Catalytic subunit of the ferredoxin-thioredoxin reductase (FTR), which catalyzes the two-electron reduction of thioredoxins by the electrons provided by reduced ferredoxin. The chain is Ferredoxin-thioredoxin reductase, catalytic chain (ftrB) from Guillardia theta (Cryptophyte).